The following is a 138-amino-acid chain: ATP synthase epsilon chain, chloroplastic (138 aa).

The protein belongs to the ATPase epsilon chain family. In terms of assembly, F-type ATPases have 2 components, CF(1) - the catalytic core - and CF(0) - the membrane proton channel. CF(1) has five subunits: alpha(3), beta(3), gamma(1), delta(1), epsilon(1). CF(0) has three main subunits: a, b and c.

The protein localises to the plastid. It localises to the chloroplast thylakoid membrane. In terms of biological role, produces ATP from ADP in the presence of a proton gradient across the membrane. The chain is ATP synthase epsilon chain, chloroplastic from Staurastrum punctulatum (Green alga).